We begin with the raw amino-acid sequence, 507 residues long: Histidine ammonia-lyase (507 aa).

The 5-imidazolinone (Ala-Gly) cross-link spans 141-143 (ASG). Position 142 is a 2,3-didehydroalanine (Ser) (serine 142).

It belongs to the PAL/histidase family. Post-translationally, contains an active site 4-methylidene-imidazol-5-one (MIO), which is formed autocatalytically by cyclization and dehydration of residues Ala-Ser-Gly.

The protein resides in the cytoplasm. It catalyses the reaction L-histidine = trans-urocanate + NH4(+). The protein operates within amino-acid degradation; L-histidine degradation into L-glutamate; N-formimidoyl-L-glutamate from L-histidine: step 1/3. This Paraburkholderia phytofirmans (strain DSM 17436 / LMG 22146 / PsJN) (Burkholderia phytofirmans) protein is Histidine ammonia-lyase.